Here is a 327-residue protein sequence, read N- to C-terminus: MGALPRVPLITAPTRLHPVDGLAPRRVLVKRDDENSPVFGGCKTRALEFVLGAARAAGATAVLTSGTAGSNHVAATALHAGRLGFRVTALVLPQEPGALVARNLRLAAGAGARLEPVPDGVSVHPDRERHRAAVAELRERGERVHVIPFGGADPVAGVAHALAGLELAEQARGLPGPLRVHLPAASTLTAAGIAAGLALSGLPFQVTAVDVVGSSSTLGPGLLGRAREVAALLGGPADAVRPEHVRHVGYAGAPYGVPDPEAGRCADLLREAADVRVDECYGAKAFHHLLGEVGDADGTHLFWHTGSTREAGEVFGPVPPELLCYVE.

The residue at position 43 (Lys-43) is an N6-(pyridoxal phosphate)lysine.

Belongs to the ACC deaminase/D-cysteine desulfhydrase family. Requires pyridoxal 5'-phosphate as cofactor.

It catalyses the reaction isonocardicin C = nocardicin C. It carries out the reaction isonocardicin A = nocardicin A. The protein operates within antibiotic biosynthesis. Functionally, involved in the biosynthesis of the beta-lactam antibiotic nocardicin A. Catalyzes the interconversion of the nocardicin homoseryl side chain in both nocardicin A with isonocardicin A, and nocardicin C with isonocardicin C. The polypeptide is Nocardicin C-9' epimerase (Nocardia uniformis subsp. tsuyamanensis).